The chain runs to 240 residues: Bactofilin BacP (240 aa).

The interval 116–240 is interacts with PadC; sequence DVEPGRLPAE…KKVVVKKKTR (125 aa). The segment at 117–240 is disordered; the sequence is VEPGRLPAER…KKVVVKKKTR (124 aa). Positions 126-150 are enriched in low complexity; the sequence is RPAVVRPTAVTRPTATPARPTIPAA. Residues 151-173 show a composition bias toward pro residues; sequence RPMPPPPPSRPTPPPPPARPSAP. Over residues 229 to 240 the composition is skewed to basic residues; sequence AKKKVVVKKKTR.

This sequence belongs to the bactofilin family. Interacts with BacN and probably also BacO, the 3 proteins colocalize as an extended structure. Interacts with PadC.

The protein localises to the cytoplasm. The protein resides in the cytoskeleton. A non-essential component of the chromosome segregation machinery. Positions the ParA-ParB-parS chromosome segregation machinery within the cell; BacP seems to be the most important bactofilin in this process. Forms a heteropolymeric, subpolar scaffold in the cell; BacP probably forms the core, BacO contributes to position and integrity while BacN does not seem to contribute to assembly. The chain is Bactofilin BacP from Myxococcus xanthus (strain DK1622).